A 55-amino-acid polypeptide reads, in one-letter code: Large ribosomal subunit protein bL33 (55 aa).

Residues 1-11 (MAKGGREKIKL) are compositionally biased toward basic and acidic residues. The disordered stretch occupies residues 1–29 (MAKGGREKIKLESTAGTGHFYTTTKNKKT). Residues 14 to 24 (TAGTGHFYTTT) are compositionally biased toward polar residues.

Belongs to the bacterial ribosomal protein bL33 family.

The protein is Large ribosomal subunit protein bL33 of Thiobacillus denitrificans (strain ATCC 25259 / T1).